The chain runs to 202 residues: Holliday junction branch migration complex subunit RuvA (202 aa).

The interval 1–64 (MIGRLRGSLA…EDAHLLYGFY (64 aa)) is domain I. Residues 65–143 (EKRERELFRE…AWEALPGTFT (79 aa)) are domain II. The interval 144–153 (LVSNGPNQAE) is flexible linker. Residues 154–202 (PVASAESDAVSALISLGYKPQEASKAVSAIKEKDLSSADLIRRALKGMG) are domain III.

Belongs to the RuvA family. Homotetramer. Forms an RuvA(8)-RuvB(12)-Holliday junction (HJ) complex. HJ DNA is sandwiched between 2 RuvA tetramers; dsDNA enters through RuvA and exits via RuvB. An RuvB hexamer assembles on each DNA strand where it exits the tetramer. Each RuvB hexamer is contacted by two RuvA subunits (via domain III) on 2 adjacent RuvB subunits; this complex drives branch migration. In the full resolvosome a probable DNA-RuvA(4)-RuvB(12)-RuvC(2) complex forms which resolves the HJ.

It localises to the cytoplasm. In terms of biological role, the RuvA-RuvB-RuvC complex processes Holliday junction (HJ) DNA during genetic recombination and DNA repair, while the RuvA-RuvB complex plays an important role in the rescue of blocked DNA replication forks via replication fork reversal (RFR). RuvA specifically binds to HJ cruciform DNA, conferring on it an open structure. The RuvB hexamer acts as an ATP-dependent pump, pulling dsDNA into and through the RuvAB complex. HJ branch migration allows RuvC to scan DNA until it finds its consensus sequence, where it cleaves and resolves the cruciform DNA. The chain is Holliday junction branch migration complex subunit RuvA from Pseudomonas syringae pv. syringae (strain B728a).